A 304-amino-acid chain; its full sequence is Oxygen-dependent coproporphyrinogen-III oxidase (304 aa).

Ser-94 contacts substrate. A divalent metal cation is bound by residues His-98 and His-108. The active-site Proton donor is the His-108. Substrate is bound at residue 110-112 (NVR). A divalent metal cation contacts are provided by His-147 and His-177. The tract at residues 242–277 (YVEFNLVYDRGTLFGLQTGGRTESILMSMPPLVRWE) is important for dimerization. A substrate-binding site is contributed by 260–262 (GGR).

It belongs to the aerobic coproporphyrinogen-III oxidase family. In terms of assembly, homodimer. A divalent metal cation serves as cofactor.

Its subcellular location is the cytoplasm. The enzyme catalyses coproporphyrinogen III + O2 + 2 H(+) = protoporphyrinogen IX + 2 CO2 + 2 H2O. It functions in the pathway porphyrin-containing compound metabolism; protoporphyrin-IX biosynthesis; protoporphyrinogen-IX from coproporphyrinogen-III (O2 route): step 1/1. In terms of biological role, involved in the heme biosynthesis. Catalyzes the aerobic oxidative decarboxylation of propionate groups of rings A and B of coproporphyrinogen-III to yield the vinyl groups in protoporphyrinogen-IX. The polypeptide is Oxygen-dependent coproporphyrinogen-III oxidase (Shewanella pealeana (strain ATCC 700345 / ANG-SQ1)).